A 1746-amino-acid chain; its full sequence is Tenascin (1746 aa).

The first 22 residues, 1–22 (MGVVTRLLVGTFLASLALPAQG), serve as a signal peptide directing secretion. Residues 23–185 (GVLKKVIRHK…CEPGWKGPNC (163 aa)) are involved in hexamer formation. N38 carries N-linked (GlcNAc...) asparagine glycosylation. 3 positions are modified to phosphoserine: S65, S70, and S72. O-linked (Xyl...) (chondroitin sulfate) serine glycosylation occurs at S72. Positions 118–145 (DVKELLSRLEELENLVSSLREQCTSGAG) form a coiled coil. N-linked (GlcNAc...) asparagine glycans are attached at residues N166 and N184. The EGF-like 1; incomplete domain occupies 174-186 (CVCEPGWKGPNCS). EGF-like domains are found at residues 187 to 217 (EPECPSNCHLRGQCVDGQCVCNEGFTGEDCS), 218 to 249 (QLACPSDCNDQGKCVNGVCVCFEGYSGVDCSR), 250 to 280 (ETCPVPCSEEHGRCVDGRCVCQEGFAGEDCN), 281 to 311 (EPLCLHNCHGRGRCVENECVCDEGFTGEDCG), 312 to 342 (ELICPKDCFDRGRCINGTCYCDEGFEGEDCG), 343 to 373 (RLACPHGCRGRGRCEEGQCVCDEGFAGADCS), 374 to 404 (ERRCPSDCHNRGRCLDGRCECDDGFEGEDCG), 405 to 435 (ELRCPGGCSGHGRCVNGQCVCDEGRTGEDCS), 436 to 466 (QLRCPNDCHGRGRCVQGRCECEHGFQGYDCS), 467 to 497 (EMSCPHDCHQHGRCVNGMCVCDDGYTGEDCR), 498 to 528 (ELRCPGDCSQRGRCVDGRCVCEHGFAGPDCA), 529 to 559 (DLACPSDCHGRGRCVNGQCVCHEGFTGKDCG), 560 to 589 (QRRCPGDCHGQGRCVDGQCVCHEGFTGLDC), and 590 to 620 (GQRSCPNDCSNWGQCVSGRCICNEGYSGEDC). 42 cysteine pairs are disulfide-bonded: C190–C200, C194–C205, C207–C216, C221–C231, C225–C236, C238–C247, C252–C263, C256–C268, C270–C279, C284–C294, C288–C299, C301–C310, C315–C325, C319–C330, C332–C341, C346–C356, C350–C361, C363–C372, C377–C387, C381–C392, C394–C403, C408–C418, C412–C423, C425–C434, C439–C449, C443–C454, C456–C465, C470–C480, C474–C485, C487–C496, C501–C511, C505–C516, C518–C527, C532–C542, C536–C547, C549–C558, C563–C573, C567–C578, C580–C589, C594–C604, C598–C609, and C611–C620. Residue N327 is glycosylated (N-linked (GlcNAc...) asparagine). Fibronectin type-III domains follow at residues 625–717 (PPKD…TPEG), 718–801 (LKFK…VTTT), 805–894 (APSQ…TGLD), 895–988 (APRN…LDPP), 989–1075 (KDFR…AGEP), 1076–1166 (EIGN…EAEP), 1167–1256 (EVDN…TAMG), 1257–1346 (SPKE…ALDG), 1347–1433 (PSGL…TDLD), and 1434–1522 (SPRD…IGLL). N788 carries an N-linked (GlcNAc...) asparagine glycan. Phosphothreonine is present on T905. Residues N1034, N1079, and N1121 are each glycosylated (N-linked (GlcNAc...) asparagine). N1354 carries an N-linked (GlcNAc...) asparagine glycan. The region spanning 1520-1735 (GLLYPFPRDC…FAEMKLRPSN (216 aa)) is the Fibrinogen C-terminal domain.

This sequence belongs to the tenascin family. In terms of assembly, homohexamer; disulfide-linked. A homotrimer may be formed in the triple coiled-coil region and may be stabilized by disulfide rings at both ends. Two of such half-hexabrachions may be disulfide linked within the central globule. Interacts with CSPG4. Interacts (via the 3rd fibronectin type-III domain) with integrin ITGA9:ITGB1. As to expression, submaxillary glands and brain.

It localises to the secreted. It is found in the extracellular space. Its subcellular location is the extracellular matrix. Functionally, extracellular matrix protein implicated in guidance of migrating neurons as well as axons during development, synaptic plasticity as well as neuronal regeneration. Promotes neurite outgrowth from cortical neurons grown on a monolayer of astrocytes. Ligand for integrins alpha-8/beta-1, alpha-9/beta-1, alpha-V/beta-3 and alpha-V/beta-6. In tumors, stimulates angiogenesis by elongation, migration and sprouting of endothelial cells. The sequence is that of Tenascin (TNC) from Sus scrofa (Pig).